The primary structure comprises 134 residues: Small ribosomal subunit protein uS9c (134 aa).

It belongs to the universal ribosomal protein uS9 family.

It is found in the plastid. It localises to the chloroplast. In Thalassiosira pseudonana (Marine diatom), this protein is Small ribosomal subunit protein uS9c (rps9).